The chain runs to 336 residues: MSRVTLSRYLIEQTRSNNTPADLRFLIEVVARACKEISHHVSKGALGGVLGSMGTENVQGEVQKKLDVISNDILLEANEWGGHLAGMASEEMDNAYQIPGKYPKGAYLLVFDPLDGSSNIDVNVSVGTIFSVLRCPNQYLSQNESLNEEAFLQPGTEQVAAGYAIYGPQTMLILTLGNGVKGFTLDRELGSFVLTHENIQVPATTAEFAINMSNQRHWEAPVQRYVGELLAGETGPLKKNYNMRWIASMVADVHRILTRGGLFMYPRDAREPSKPGKLRLMYEANPMSFIIEQAGGASTNGYDRILDIKPESLHQRVSVILGSKEEVERVTAYHKE.

The Mg(2+) site is built by glutamate 90, aspartate 112, leucine 114, and aspartate 115. Substrate contacts are provided by residues 115 to 118 (DGSS), asparagine 211, and lysine 277. Glutamate 283 is a binding site for Mg(2+).

Belongs to the FBPase class 1 family. As to quaternary structure, homotetramer. Requires Mg(2+) as cofactor.

Its subcellular location is the cytoplasm. The enzyme catalyses beta-D-fructose 1,6-bisphosphate + H2O = beta-D-fructose 6-phosphate + phosphate. Its pathway is carbohydrate biosynthesis; gluconeogenesis. The chain is Fructose-1,6-bisphosphatase class 1 from Pseudomonas putida (strain GB-1).